The primary structure comprises 508 residues: CXXC-type zinc finger protein 1 (508 aa).

A CXXC-type zinc finger spans residues Glu-10–Phe-47. 2 disordered regions span residues Gln-95–Lys-156 and Lys-453–Asn-508. Low complexity-rich tracts occupy residues Ala-113–Asn-123 and Ser-454–Ser-481.

In terms of assembly, component of the SET2 complex (also known as the SET1/COMPASS complex), which contains at least set-2, swd-2.1, cfp-1, rbbp-5, wdr-5.1, dpy-30 and ash-2. Within the complex, interacts with wdr-5.1, ash-2 and dpy-30. Also interacts with the SIN3S complex, which contains at least sin-3, hda-1, athp-1 and mrg-1. Interacts with sin-3, hda-1 and mrg-1.

Its subcellular location is the nucleus. Functionally, transcriptional activator that exhibits a unique DNA binding specificity for CpG motifs; enriched at promoters containing the trimethylation mark on histone H3 'Lys-4' (H3K4me3). Forms part of the SET2 complex and interacts with the SIN3S HDAC complex at promoters. Required for H3K4 trimethylation and plays a repressive role in the expression of heat shock and salt-inducible genes. Required for fertility, in cooperation with class I histone deacetylases (HDACs). The sequence is that of CXXC-type zinc finger protein 1 from Caenorhabditis elegans.